We begin with the raw amino-acid sequence, 238 residues long: Probable transcriptional regulatory protein SPD_1725 (238 aa).

It belongs to the TACO1 family. YeeN subfamily.

The protein resides in the cytoplasm. The polypeptide is Probable transcriptional regulatory protein SPD_1725 (Streptococcus pneumoniae serotype 2 (strain D39 / NCTC 7466)).